Consider the following 250-residue polypeptide: Small ribosomal subunit protein uS3 (250 aa).

In terms of domain architecture, KH type-2 spans 16–85; sequence IDEYLEKELE…NPQIEVKEVS (70 aa).

The protein belongs to the universal ribosomal protein uS3 family. In terms of assembly, part of the 30S ribosomal subunit.

Functionally, binds the lower part of the 30S subunit head. The polypeptide is Small ribosomal subunit protein uS3 (Methanobrevibacter smithii (strain ATCC 35061 / DSM 861 / OCM 144 / PS)).